The following is a 410-amino-acid chain: MLWETSSLRPPTGARDFLPREVQRRERLEAQLTQVFRRYGYQRIITPTLEPLETLLAGGSIRAEAVLQLRDGEGTMLGLRPEFTASIVRAAATRLASGPLPLRLYYHGNVFRNSRREEGSYSSQEFFQSGVELIGAGGWLADAEILLLLADCVRAVGLSNWTLLLGDVSLTESLLNSVTPKAQAAVRRAIAQLDYVYLEAAPLPEAARQIGLQILGLRGQPEQVLPQLAQLPVSPERLRDLRQLCQILEAQQVRVVLDLSLLQTLAYYTGIVFQAVVGGEIIALGGRYDRLYALYSPQQLEQPGIGFTLLPDTLLRLLPPTPQDEATGCKRLVVPLVPAGIPAALALAARWRESEAVELELLDRSPEEIEAYARRCRIPEIAWVQADGSYHISPVKYPEPPDPTGHCGPR.

This sequence belongs to the class-II aminoacyl-tRNA synthetase family. HisZ subfamily. In terms of assembly, heteromultimer composed of HisG and HisZ subunits.

It localises to the cytoplasm. Its pathway is amino-acid biosynthesis; L-histidine biosynthesis; L-histidine from 5-phospho-alpha-D-ribose 1-diphosphate: step 1/9. In terms of biological role, required for the first step of histidine biosynthesis. May allow the feedback regulation of ATP phosphoribosyltransferase activity by histidine. The protein is ATP phosphoribosyltransferase regulatory subunit of Synechococcus sp. (strain JA-3-3Ab) (Cyanobacteria bacterium Yellowstone A-Prime).